The chain runs to 1020 residues: Protein translocase subunit SecA (1020 aa).

ATP-binding positions include glutamine 143, 161–165 (GEGKT), and aspartate 661. Positions 974-1020 (SVYNASPGAENEAPLQRPVTADSKPGRNDPCPCGSGKKYKNCHGQQP) are disordered. Zn(2+)-binding residues include cysteine 1004, cysteine 1006, cysteine 1015, and histidine 1016.

The protein belongs to the SecA family. As to quaternary structure, monomer and homodimer. Part of the essential Sec protein translocation apparatus which comprises SecA, SecYEG and auxiliary proteins SecDF. Other proteins may also be involved. Requires Zn(2+) as cofactor.

The protein localises to the cell inner membrane. The protein resides in the cytoplasm. The catalysed reaction is ATP + H2O + cellular proteinSide 1 = ADP + phosphate + cellular proteinSide 2.. Functionally, part of the Sec protein translocase complex. Interacts with the SecYEG preprotein conducting channel. Has a central role in coupling the hydrolysis of ATP to the transfer of proteins into and across the cell membrane, serving as an ATP-driven molecular motor driving the stepwise translocation of polypeptide chains across the membrane. This chain is Protein translocase subunit SecA, found in Chlorobium phaeovibrioides (strain DSM 265 / 1930) (Prosthecochloris vibrioformis (strain DSM 265)).